The primary structure comprises 628 residues: WW domain-containing adapter protein with coiled-coil (628 aa).

3 disordered regions span residues 1–130, 152–338, and 417–532; these read MVMY…DDWS, EKPK…PQSP, and NQSP…SARS. The span at 37–49 shows a compositional bias: basic and acidic residues; that stretch reads SSDHRHDKMRDST. Residues 74–84 show a composition bias toward basic residues; it reads GKAKSMHLHRV. The span at 101–121 shows a compositional bias: low complexity; it reads NHSAIHSSNSHSSTPSKTSDS. The WW domain maps to 123 to 156; it reads YDPADDWSEHISSSGKKYYYNCRTEVSQWEKPKE. Basic and acidic residues-rich tracts occupy residues 152–168 and 176–185; these read EKPK…KETS and PKDRDYRREA. A compositionally biased stretch (polar residues) spans 199–213; that stretch reads DTSTMLPQNILSQTS. A compositionally biased stretch (basic and acidic residues) spans 214-227; it reads RHNDRDYRLPRTDS. Low complexity-rich tracts occupy residues 230–260 and 299–331; these read SAAP…TVQP and SDKS…TVPV. The segment covering 420 to 446 has biased composition (polar residues); sequence PMSLTSDASSPRSYVSPRISTPQTNTV. Residues 467–486 show a composition bias toward low complexity; the sequence is GSKQGSSAQTASQQSSAADK. The span at 511–532 shows a compositional bias: polar residues; it reads PNHNSSTCASSTSAPQNSSARS. Residues 599–625 adopt a coiled-coil conformation; the sequence is QATLREQRILFLRQQIKELEKLKNQNS.

The protein localises to the nucleus. Functionally, acts as a linker between gene transcription and histone H2B monoubiquitination at 'Lys-120' (H2BK120ub1). Positive regulator of amino acid starvation-induced autophagy. Positively regulates MTOR activity. May negatively regulate the ubiquitin proteasome pathway. The chain is WW domain-containing adapter protein with coiled-coil (wac) from Xenopus tropicalis (Western clawed frog).